Consider the following 375-residue polypeptide: 5-amino-6-(D-ribitylamino)uracil--L-tyrosine 4-hydroxyphenyl transferase 1 (375 aa).

Positions 50-284 (VTYVVNRNIN…AVSRILFHGH (235 aa)) constitute a Radical SAM core domain. Residues Cys-64, Cys-68, and Cys-71 each coordinate [4Fe-4S] cluster.

It belongs to the radical SAM superfamily. CofH family. In terms of assembly, consists of two subunits, CofG and CofH. Requires [4Fe-4S] cluster as cofactor.

It carries out the reaction 5-amino-6-(D-ribitylamino)uracil + L-tyrosine + S-adenosyl-L-methionine = 5-amino-5-(4-hydroxybenzyl)-6-(D-ribitylimino)-5,6-dihydrouracil + 2-iminoacetate + 5'-deoxyadenosine + L-methionine + H(+). It participates in cofactor biosynthesis; coenzyme F0 biosynthesis. Catalyzes the radical-mediated synthesis of 5-amino-5-(4-hydroxybenzyl)-6-(D-ribitylimino)-5,6-dihydrouracil from 5-amino-6-(D-ribitylamino)uracil and L-tyrosine. The polypeptide is 5-amino-6-(D-ribitylamino)uracil--L-tyrosine 4-hydroxyphenyl transferase 1 (Methanosarcina acetivorans (strain ATCC 35395 / DSM 2834 / JCM 12185 / C2A)).